The primary structure comprises 399 residues: Elongation factor Tu (399 aa).

Residues 10-209 enclose the tr-type G domain; it reads KPHVNIGTIG…AVDSYIPTPV (200 aa). The segment at 19–26 is G1; that stretch reads GHVDHGKT. 19-26 serves as a coordination point for GTP; that stretch reads GHVDHGKT. Thr-26 is a binding site for Mg(2+). The interval 60-64 is G2; that stretch reads GITIA. A G3 region spans residues 81–84; sequence DCPG. GTP contacts are provided by residues 81–85 and 136–139; these read DCPGH and NKAD. Residues 136-139 form a G4 region; that stretch reads NKAD. A G5 region spans residues 174–176; sequence SAL.

It belongs to the TRAFAC class translation factor GTPase superfamily. Classic translation factor GTPase family. EF-Tu/EF-1A subfamily. As to quaternary structure, monomer.

Its subcellular location is the cytoplasm. The catalysed reaction is GTP + H2O = GDP + phosphate + H(+). GTP hydrolase that promotes the GTP-dependent binding of aminoacyl-tRNA to the A-site of ribosomes during protein biosynthesis. In Campylobacter fetus subsp. fetus (strain 82-40), this protein is Elongation factor Tu.